The following is a 109-amino-acid chain: Protein reprimo (109 aa).

Residues N7 and N18 are each glycosylated (N-linked (GlcNAc...) asparagine). Residues 56–76 form a helical membrane-spanning segment; it reads VVQIAVMCVLSLTVVFGIFFL. S98 is subject to Phosphoserine.

Belongs to the reprimo family.

The protein localises to the cytoplasm. It is found in the membrane. Its function is as follows. May be involved in the regulation of p53-dependent G2 arrest of the cell cycle. Seems to induce cell cycle arrest by inhibiting CDK1 activity and nuclear translocation of the CDC2 cyclin B1 complex. The protein is Protein reprimo (RPRM) of Bos taurus (Bovine).